The sequence spans 360 residues: S-adenosylmethionine:tRNA ribosyltransferase-isomerase (360 aa).

It belongs to the QueA family. In terms of assembly, monomer.

The protein localises to the cytoplasm. It catalyses the reaction 7-aminomethyl-7-carbaguanosine(34) in tRNA + S-adenosyl-L-methionine = epoxyqueuosine(34) in tRNA + adenine + L-methionine + 2 H(+). It functions in the pathway tRNA modification; tRNA-queuosine biosynthesis. Transfers and isomerizes the ribose moiety from AdoMet to the 7-aminomethyl group of 7-deazaguanine (preQ1-tRNA) to give epoxyqueuosine (oQ-tRNA). This Rhizobium rhizogenes (strain K84 / ATCC BAA-868) (Agrobacterium radiobacter) protein is S-adenosylmethionine:tRNA ribosyltransferase-isomerase.